The chain runs to 144 residues: Large ribosomal subunit protein uL22 (144 aa).

The segment at 123-144 (ELVKKRTMGHKKEKAKQKQKQQ) is disordered. Basic residues predominate over residues 125-144 (VKKRTMGHKKEKAKQKQKQQ).

The protein belongs to the universal ribosomal protein uL22 family. Part of the 50S ribosomal subunit.

Functionally, this protein binds specifically to 23S rRNA; its binding is stimulated by other ribosomal proteins, e.g. L4, L17, and L20. It is important during the early stages of 50S assembly. It makes multiple contacts with different domains of the 23S rRNA in the assembled 50S subunit and ribosome. Its function is as follows. The globular domain of the protein is located near the polypeptide exit tunnel on the outside of the subunit, while an extended beta-hairpin is found that lines the wall of the exit tunnel in the center of the 70S ribosome. The protein is Large ribosomal subunit protein uL22 of Mycoplasma genitalium (strain ATCC 33530 / DSM 19775 / NCTC 10195 / G37) (Mycoplasmoides genitalium).